Consider the following 117-residue polypeptide: Large ribosomal subunit protein eL34 (117 aa).

Phosphoserine is present on S12. 2 positions are modified to N6-acetyllysine: K36 and K43. Residue K108 forms a Glycyl lysine isopeptide (Lys-Gly) (interchain with G-Cter in SUMO2) linkage.

It belongs to the eukaryotic ribosomal protein eL34 family. As to quaternary structure, component of the large ribosomal subunit.

It localises to the cytoplasm. The protein localises to the cytosol. It is found in the endoplasmic reticulum. Its function is as follows. Component of the large ribosomal subunit. The ribosome is a large ribonucleoprotein complex responsible for the synthesis of proteins in the cell. The chain is Large ribosomal subunit protein eL34 (Rpl34) from Mus musculus (Mouse).